Reading from the N-terminus, the 505-residue chain is Glutamate--cysteine ligase (505 aa).

It belongs to the glutamate--cysteine ligase type 1 family. Type 1 subfamily.

The catalysed reaction is L-cysteine + L-glutamate + ATP = gamma-L-glutamyl-L-cysteine + ADP + phosphate + H(+). It functions in the pathway sulfur metabolism; glutathione biosynthesis; glutathione from L-cysteine and L-glutamate: step 1/2. This is Glutamate--cysteine ligase from Wigglesworthia glossinidia brevipalpis.